The following is a 258-amino-acid chain: F-box/SPRY domain-containing protein 1 (258 aa).

The F-box domain maps to 6–54 (TEYAPDIPDNVLELIFSYLKLQDLRNCSLVCKSWNRFLNDENNEVWRAQ). The B30.2/SPRY domain occupies 64–256 (FKTDLLSVVP…ISMVYLGPPL (193 aa)).

The protein belongs to the FBXO45/Fsn family. As to quaternary structure, component of an E3 ubiquitin ligase complex composed of hiw and Fsn.

It is found in the synapse. The protein operates within protein modification; protein ubiquitination. Functionally, required in the presynaptic motoneuron to down-regulate the levels of wnd and restrain synaptic terminal growth at the neuromuscular junction (NMJ). This Aedes aegypti (Yellowfever mosquito) protein is F-box/SPRY domain-containing protein 1.